Reading from the N-terminus, the 266-residue chain is Integral membrane protein 2B (266 aa).

At 1 to 54 the chain is on the cytoplasmic side; the sequence is MVKVTFNSALAQKEAKKDEPKSSEEALIVPPDAVAVDCKDPGDVVPVGQRRAWC. Residues 55–75 traverse the membrane as a helical; Signal-anchor for type II membrane protein segment; sequence WCMCFGLAFMLAGVILGGAYL. The Lumenal portion of the chain corresponds to 76–266; the sequence is YKYFALQPDD…KFAVETLICS (191 aa). A necessary for interaction with APP and inhibitor effects on APP processing region spans residues 102-134; the sequence is EPSADAPAARYQTIEENIKIFEEDAVEFISVPV. Residues 137–231 form the BRICHOS domain; it reads FADSDPANIV…LCHDKETYKL (95 aa). 2 disulfide bridges follow: cysteine 164–cysteine 223 and cysteine 248–cysteine 265. N-linked (GlcNAc...) asparagine glycosylation is present at asparagine 170.

It belongs to the ITM2 family. In terms of assembly, homodimer; disulfide-linked. Interacts with SPPL2A and SPPL2B. Interacts with APP. Mature BRI2 (mBRI2) interacts with the APP amyloid-beta A4 protein; the interaction occurs at the cell surface and in the endocytic compartments and enable alpha- and beta-secretase-induced APP cleavage inhibition. Mature BRI2 (mBRI2) interacts with the APP C99; the interaction occurs in the endocytic compartments and enable gamma-secretase-induced C99 cleavage inhibition. May form heterodimers with Bri23 peptide and APP amyloid-beta protein 40. Interacts with ADAM7 in sperm; the interaction increases following capacitation. The ectodomain C-terminal part of the imBRI2 is processed by furin producing a secreted Bri23 peptide and a mature BRI2, membrane form (mBRI2). The remaining part of the ectodomain of mBRI2 containing the BRICHOS domain is cleaved by ADAM10 and is secreted (BRI2C, soluble form). The membrane-bound N-terminal fragment (BRI2C, membrane form) is further proteolytically processed by SPPL2A and SPPL2B through regulated intramembrane proteolysis producing a secreted C-peptide and a BRI2 intracellular domain (BRI2 ICD) released in the cytosol. Shedding by ADAM10 facilitates intramembrane cleavage but is not absolutely required for BRI2 ICD generation. In terms of processing, glycosylation at Asn-170 is important for cell surface localization, but doesn't affect furin- and ADAM10-induced proteolytic processing. In terms of tissue distribution, expressed in the brain, testis, testicular sperm, epididymis and mature epididymal sperm (at protein level).

The protein localises to the golgi apparatus membrane. The protein resides in the cell membrane. It localises to the endosome membrane. It is found in the secreted. Plays a regulatory role in the processing of the amyloid-beta A4 precursor protein (APP) and acts as an inhibitor of the amyloid-beta peptide aggregation and fibrils deposition. Plays a role in the induction of neurite outgrowth. Functions as a protease inhibitor by blocking access of secretases to APP cleavage sites. Functionally, mature BRI2 (mBRI2) functions as a modulator of the amyloid-beta A4 precursor protein (APP) processing leading to a strong reduction in the secretion of secretase-processed amyloid-beta protein 40 and amyloid-beta protein 42. Its function is as follows. Bri23 peptide prevents aggregation of APP amyloid-beta protein 42 into toxic oligomers. This is Integral membrane protein 2B (Itm2b) from Mus musculus (Mouse).